A 229-amino-acid polypeptide reads, in one-letter code: Uracil-DNA glycosylase (229 aa).

The active-site Proton acceptor is the Asp-71.

The protein belongs to the uracil-DNA glycosylase (UDG) superfamily. UNG family.

Its subcellular location is the cytoplasm. The catalysed reaction is Hydrolyzes single-stranded DNA or mismatched double-stranded DNA and polynucleotides, releasing free uracil.. In terms of biological role, excises uracil residues from the DNA which can arise as a result of misincorporation of dUMP residues by DNA polymerase or due to deamination of cytosine. In Campylobacter lari (strain RM2100 / D67 / ATCC BAA-1060), this protein is Uracil-DNA glycosylase.